A 153-amino-acid chain; its full sequence is Riboflavin synthase (153 aa).

This sequence belongs to the DMRL synthase family. In terms of assembly, homooligomer. The cofactor is Mg(2+).

It catalyses the reaction 2 6,7-dimethyl-8-(1-D-ribityl)lumazine + H(+) = 5-amino-6-(D-ribitylamino)uracil + riboflavin. It participates in cofactor biosynthesis; riboflavin biosynthesis; riboflavin from 2-hydroxy-3-oxobutyl phosphate and 5-amino-6-(D-ribitylamino)uracil: step 2/2. Its activity is regulated as follows. Inhibited by EDTA. This chain is Riboflavin synthase (ribC), found in Methanothermobacter thermautotrophicus (strain ATCC 29096 / DSM 1053 / JCM 10044 / NBRC 100330 / Delta H) (Methanobacterium thermoautotrophicum).